The following is a 155-amino-acid chain: Ribosomal RNA large subunit methyltransferase H (155 aa).

S-adenosyl-L-methionine is bound by residues Leu-72, Gly-103, and Leu-122–Leu-127.

This sequence belongs to the RNA methyltransferase RlmH family. In terms of assembly, homodimer.

It is found in the cytoplasm. It carries out the reaction pseudouridine(1915) in 23S rRNA + S-adenosyl-L-methionine = N(3)-methylpseudouridine(1915) in 23S rRNA + S-adenosyl-L-homocysteine + H(+). Specifically methylates the pseudouridine at position 1915 (m3Psi1915) in 23S rRNA. This is Ribosomal RNA large subunit methyltransferase H from Aeromonas salmonicida (strain A449).